Consider the following 386-residue polypeptide: Methylthioribose-1-phosphate isomerase (386 aa).

Asp258 (proton donor) is an active-site residue.

This sequence belongs to the eIF-2B alpha/beta/delta subunits family. MtnA subfamily.

It is found in the cytoplasm. It localises to the nucleus. It catalyses the reaction 5-(methylsulfanyl)-alpha-D-ribose 1-phosphate = 5-(methylsulfanyl)-D-ribulose 1-phosphate. It functions in the pathway amino-acid biosynthesis; L-methionine biosynthesis via salvage pathway; L-methionine from S-methyl-5-thio-alpha-D-ribose 1-phosphate: step 1/6. Functionally, catalyzes the interconversion of methylthioribose-1-phosphate (MTR-1-P) into methylthioribulose-1-phosphate (MTRu-1-P). This Uncinocarpus reesii (strain UAMH 1704) protein is Methylthioribose-1-phosphate isomerase.